A 211-amino-acid polypeptide reads, in one-letter code: Large ribosomal subunit protein uL3 (211 aa).

Gln150 bears the N5-methylglutamine mark.

The protein belongs to the universal ribosomal protein uL3 family. As to quaternary structure, part of the 50S ribosomal subunit. Forms a cluster with proteins L14 and L19. Post-translationally, methylated by PrmB.

Its function is as follows. One of the primary rRNA binding proteins, it binds directly near the 3'-end of the 23S rRNA, where it nucleates assembly of the 50S subunit. This chain is Large ribosomal subunit protein uL3, found in Pseudomonas fluorescens (strain SBW25).